A 377-amino-acid chain; its full sequence is Terpene synthase 1 (377 aa).

A DDxx(x)D/E motif motif is present at residues 81–86 (DDALDA). Positions 221–229 (NDLVSYEKE) match the NDxxSxxxD/E motif motif. The disordered stretch occupies residues 326–359 (RKQSSSPNLTNSISIPTNNTNNSNNITSSPNKKQ). Low complexity predominate over residues 335 to 356 (TNSISIPTNNTNNSNNITSSPN).

The protein belongs to the terpene synthase family.

The catalysed reaction is (2E,6E)-farnesyl diphosphate = (2S,3R,6S,9S)-(-)-protoillud-7-ene + diphosphate. In terms of biological role, terpene synthase that converts its substrate farnesyl diphosphate (FPP) into the sesquiterpene protoillud-7-ene. The polypeptide is Terpene synthase 1 (Dictyostelium purpureum (Slime mold)).